A 109-amino-acid polypeptide reads, in one-letter code: Large ribosomal subunit protein uL22 (109 aa).

This sequence belongs to the universal ribosomal protein uL22 family. Part of the 50S ribosomal subunit.

In terms of biological role, this protein binds specifically to 23S rRNA; its binding is stimulated by other ribosomal proteins, e.g. L4, L17, and L20. It is important during the early stages of 50S assembly. It makes multiple contacts with different domains of the 23S rRNA in the assembled 50S subunit and ribosome. The globular domain of the protein is located near the polypeptide exit tunnel on the outside of the subunit, while an extended beta-hairpin is found that lines the wall of the exit tunnel in the center of the 70S ribosome. The polypeptide is Large ribosomal subunit protein uL22 (Cupriavidus metallidurans (strain ATCC 43123 / DSM 2839 / NBRC 102507 / CH34) (Ralstonia metallidurans)).